Here is a 582-residue protein sequence, read N- to C-terminus: ATP-dependent lipid A-core flippase (582 aa).

Helical transmembrane passes span 15 to 35 (LWPI…ALVI), 68 to 88 (YVVV…SYCL), 140 to 160 (GALI…AVML), 161 to 181 (YTSW…AVLI), and 254 to 274 (VQII…VPTI). In terms of domain architecture, ABC transmembrane type-1 spans 27–310 (VVSGIALVIN…LTNVNAQFQK (284 aa)). The region spanning 342–578 (LSFKNVTFTY…NGAYKQLHHI (237 aa)) is the ABC transporter domain. 376–383 (GRSGSGKS) provides a ligand contact to ATP.

This sequence belongs to the ABC transporter superfamily. Lipid exporter (TC 3.A.1.106) family. In terms of assembly, homodimer.

The protein localises to the cell inner membrane. It catalyses the reaction ATP + H2O + lipid A-core oligosaccharideSide 1 = ADP + phosphate + lipid A-core oligosaccharideSide 2.. Functionally, involved in lipopolysaccharide (LPS) biosynthesis. Translocates lipid A-core from the inner to the outer leaflet of the inner membrane. Transmembrane domains (TMD) form a pore in the inner membrane and the ATP-binding domain (NBD) is responsible for energy generation. The chain is ATP-dependent lipid A-core flippase from Pasteurella multocida (strain Pm70).